The primary structure comprises 233 residues: Endo-1,4-beta-xylanase 1 (233 aa).

The N-terminal stretch at 1 to 20 is a signal peptide; the sequence is MVSFTSIVTAVVALAGSALA. Asn27 carries an N-linked (GlcNAc...) asparagine glycan. In terms of domain architecture, GH11 spans 40-230; it reads QSTPSSTGRH…SAGNSNINVQ (191 aa). Glu126 (nucleophile) is an active-site residue. The Proton donor role is filled by Glu217.

The protein belongs to the glycosyl hydrolase 11 (cellulase G) family.

The protein resides in the secreted. It carries out the reaction Endohydrolysis of (1-&gt;4)-beta-D-xylosidic linkages in xylans.. It participates in glycan degradation; xylan degradation. Functionally, endo-1,4-beta-xylanase involved in the hydrolysis of xylan, a major structural heterogeneous polysaccharide found in plant biomass representing the second most abundant polysaccharide in the biosphere, after cellulose. Accounts for approximately 70 percent of the endoxylanase activity in the culture filtrate. The chain is Endo-1,4-beta-xylanase 1 (XYL1) from Pyricularia grisea (Crabgrass-specific blast fungus).